A 378-amino-acid polypeptide reads, in one-letter code: MAKKLKKNEEITKKFGDERRKALDDALKNIEKDFGKGAVMRLGERAEQKVQVMSSGSLALDIALGAGGYPKGRIIEIYGPESSGKTTVALHAVAQAQKEGGIAAFIDAEHALDPAYAAALGVNIDELLLSQPDSGEQGLEIAGKLIDSGAVDLVVVDSVAALVPRAEIDGDIGDSHVGLQARMMSQAMRKLSASINKTKTIAIFINQLREKVGVMFGNPETTPGGRALKFYASVRLDVRGTTQIKGTGDQKDSSIGKETKIKVVKNKVAPPFKVAEVEIMYGEGISRTGELVKIASDLDIIQKAGAWFSYNGEKIGQGSENAKRYLADHPELFDEIDRKVRVKFGLLEESEEESAMVVASEEIDDLALDLDNGIEIED.

79–86 serves as a coordination point for ATP; that stretch reads GPESSGKT.

The protein belongs to the RecA family.

Its subcellular location is the cytoplasm. Can catalyze the hydrolysis of ATP in the presence of single-stranded DNA, the ATP-dependent uptake of single-stranded DNA by duplex DNA, and the ATP-dependent hybridization of homologous single-stranded DNAs. It interacts with LexA causing its activation and leading to its autocatalytic cleavage. The polypeptide is Protein RecA (Streptococcus pyogenes serotype M28 (strain MGAS6180)).